The primary structure comprises 163 residues: uncharacterized protein (163 aa).

Positions 136-161 (QKYIENHQKEINEHVEKLRTLHKELR) form a coiled coil.

This is an uncharacterized protein from Acanthamoeba polyphaga (Amoeba).